The following is a 528-amino-acid chain: GMP synthase [glutamine-hydrolyzing] (528 aa).

The region spanning 13–204 is the Glutamine amidotransferase type-1 domain; it reads AIVILDFGSQ…VYHICGCEPD (192 aa). The active-site Nucleophile is Cys-90. Residues His-178 and Glu-180 contribute to the active site. Residues 205–403 enclose the GMPS ATP-PPase domain; the sequence is WTTTAFIEEA…LGLPEEIVRR (199 aa). 232 to 238 is an ATP binding site; sequence SGGVDSS.

As to quaternary structure, homodimer.

The enzyme catalyses XMP + L-glutamine + ATP + H2O = GMP + L-glutamate + AMP + diphosphate + 2 H(+). Its pathway is purine metabolism; GMP biosynthesis; GMP from XMP (L-Gln route): step 1/1. Its function is as follows. Catalyzes the synthesis of GMP from XMP. This Prochlorococcus marinus (strain MIT 9303) protein is GMP synthase [glutamine-hydrolyzing].